Here is a 667-residue protein sequence, read N- to C-terminus: Long-chain fatty acid transport protein 3 (667 aa).

The helical transmembrane segment at 3 to 23 (ALLLLLPLLLLLPLLLKLDVW) threads the bilayer. The disordered stretch occupies residues 114–144 (TGGRRGSGRGSTEEGARVAPPAGDAAARGTT). A compositionally biased stretch (low complexity) spans 130 to 144 (RVAPPAGDAAARGTT). ATP-binding positions include 272–276 (TSGTT), His-315, Thr-412, Asp-512, Arg-527, and Lys-619.

Belongs to the ATP-dependent AMP-binding enzyme family. As to expression, expressed at high levels in adrenal gland, testis and ovary. Expressed at lower levels in adult brain. Found in adrenal cortical cells, spermatocytes and interstitial cells of the testis, theca cells of the ovary, cerebral cortical neurons, and cerebellar Purkinje cells (at protein level).

It is found in the mitochondrion membrane. It carries out the reaction a fatty acid(in) = a fatty acid(out). It catalyses the reaction a long-chain fatty acid + ATP + CoA = a long-chain fatty acyl-CoA + AMP + diphosphate. The enzyme catalyses (5Z,8Z,11Z,14Z)-eicosatetraenoate + ATP + CoA = (5Z,8Z,11Z,14Z)-eicosatetraenoyl-CoA + AMP + diphosphate. The catalysed reaction is hexadecanoate + ATP + CoA = hexadecanoyl-CoA + AMP + diphosphate. It carries out the reaction (9Z)-octadecenoate + ATP + CoA = (9Z)-octadecenoyl-CoA + AMP + diphosphate. It catalyses the reaction (9Z,12Z)-octadecadienoate + ATP + CoA = (9Z,12Z)-octadecadienoyl-CoA + AMP + diphosphate. The enzyme catalyses a very long-chain fatty acid + ATP + CoA = a very long-chain fatty acyl-CoA + AMP + diphosphate. The catalysed reaction is tetracosanoate + ATP + CoA = tetracosanoyl-CoA + AMP + diphosphate. In terms of biological role, mainly functions as an acyl-CoA ligase catalyzing the ATP-dependent formation of fatty acyl-CoA using LCFA and very-long-chain fatty acids (VLCFA) as substrates. Can mediate the levels of long-chain fatty acids (LCFA) in the cell by facilitating their transport across membranes. The protein is Long-chain fatty acid transport protein 3 (Slc27a3) of Mus musculus (Mouse).